Reading from the N-terminus, the 583-residue chain is Transmembrane protein 108 (583 aa).

A helical transmembrane segment spans residues A7–F27. Residues E31–P176 are interacts with SH3GL2. 2 disordered regions span residues V71–A360 and V376–S404. Polar residues-rich tracts occupy residues P80–P93 and P100–T122. Low complexity predominate over residues G177 to P187. The tract at residues R180–T413 is interacts with DST (isoform 1). 3 stretches are compositionally biased toward polar residues: residues Y251 to P273, A310 to R319, and D333 to G357. A helical membrane pass occupies residues I477–V497. The interaction with CYFIP2 stretch occupies residues C498–I583.

As to quaternary structure, interacts with DST (isoform 1). Interacts with SH3GL2. Interacts (via N-terminus) with CYFIP1 and CYFIP2; the interactions associate TMEM108 with the WAVE1 complex. Glycosylated.

The protein localises to the membrane. The protein resides in the postsynaptic density. It is found in the endosome membrane. It localises to the cell projection. Its subcellular location is the axon. The protein localises to the dendrite. The protein resides in the early endosome. In terms of biological role, transmembrane protein required for proper cognitive functions. Involved in the development of dentate gyrus (DG) neuron circuitry, is necessary for AMPA receptors surface expression and proper excitatory postsynaptic currents of DG granule neurons. Regulates the organization and stability of the microtubule network of sensory neurons to allow axonal transport. Through the interaction with DST, mediates the docking of the dynein/dynactin motor complex to vesicle cargos for retrograde axonal transport. In hippocampal neurons, required for BDNF-dependent dendrite outgrowth. Cooperates with SH3GL2 and recruits the WAVE1 complex to facilitate actin-dependent BDNF:NTRK2 early endocytic trafficking and mediate signaling from early endosomes. The chain is Transmembrane protein 108 from Bos taurus (Bovine).